The primary structure comprises 468 residues: Cytochrome bd ubiquinol oxidase subunit 1 (468 aa).

9 helical membrane-spanning segments follow: residues 15-35 (TLFH…VALM), 51-71 (AKFW…TGIL), 95-115 (LAIE…LWIF), 124-144 (IHAL…FWIL), 177-197 (LWVE…FFIA), 219-239 (LAMI…HMQA), 331-351 (FRIM…GLWL), 366-386 (IMIA…IMTE), and 416-436 (SIIA…FLFI). His18 contributes to the heme b binding site. His183 lines the heme b pocket. Met334 contacts heme b. Residues 448–468 (HHDVPVSTDPFSQEVYHGISS) are disordered.

The protein belongs to the cytochrome ubiquinol oxidase subunit 1 family. In terms of assembly, heterodimer of subunits I and II. Heme b serves as cofactor. It depends on heme d cis-diol as a cofactor.

The protein localises to the cell membrane. It catalyses the reaction 2 a ubiquinol + O2(in) + 4 H(+)(in) = 2 a ubiquinone + 2 H2O(in) + 4 H(+)(out). The chain is Cytochrome bd ubiquinol oxidase subunit 1 (cydA) from Bacillus subtilis (strain 168).